Consider the following 808-residue polypeptide: Type VI secretion system spike protein VgrG4b (808 aa).

The protein belongs to the VgrG protein family.

Its subcellular location is the secreted. Part of the H2 type VI secretion system (H2-T6SS) specialized secretion system, which delivers several virulence factors in both prokaryotic and eukaryotic cells during infection. Allows the delivery of the phospholipase effector PldA to target cells where it exerts its toxicity. The sequence is that of Type VI secretion system spike protein VgrG4b from Pseudomonas aeruginosa (strain ATCC 15692 / DSM 22644 / CIP 104116 / JCM 14847 / LMG 12228 / 1C / PRS 101 / PAO1).